The primary structure comprises 318 residues: Na(+)-translocating ferredoxin:NAD(+) oxidoreductase complex subunit D (318 aa).

3 consecutive transmembrane segments (helical) span residues 35–55 (LAVAGYVFGLWALALVAICVI), 77–99 (WSAVVTGVLLAFNLPINAPWWIG), and 114–134 (FGGLGQNFINPALAARAFLLA). Thr-156 carries the post-translational modification FMN phosphoryl threonine. 3 helical membrane-spanning segments follow: residues 182–202 (VYGCIGEISALALLIGGLYLI), 206–226 (IISWRIPTIYLLTIAIFALLV), and 261–281 (IIYAIGCGLITMIIRLYGGYP).

It belongs to the NqrB/RnfD family. As to quaternary structure, the complex is composed of six subunits: RnfA, RnfB, RnfC, RnfD, RnfE and RnfG. FMN serves as cofactor.

It is found in the cell membrane. It catalyses the reaction 2 reduced [2Fe-2S]-[ferredoxin] + Na(+)(in) + NAD(+) + H(+) = 2 oxidized [2Fe-2S]-[ferredoxin] + Na(+)(out) + NADH. In terms of biological role, part of a membrane-bound complex that couples electron transfer with translocation of ions across the membrane. Couples electron transfer from reduced ferredoxin to NAD(+) with electrogenic movement of Na(+) out of the cell. Involved in caffeate respiration. The polypeptide is Na(+)-translocating ferredoxin:NAD(+) oxidoreductase complex subunit D (Acetobacterium woodii (strain ATCC 29683 / DSM 1030 / JCM 2381 / KCTC 1655 / WB1)).